Here is a 274-residue protein sequence, read N- to C-terminus: 2,3,4,5-tetrahydropyridine-2,6-dicarboxylate N-succinyltransferase (274 aa).

2 residues coordinate substrate: Arg104 and Asp141.

This sequence belongs to the transferase hexapeptide repeat family. In terms of assembly, homotrimer.

Its subcellular location is the cytoplasm. It catalyses the reaction (S)-2,3,4,5-tetrahydrodipicolinate + succinyl-CoA + H2O = (S)-2-succinylamino-6-oxoheptanedioate + CoA. Its pathway is amino-acid biosynthesis; L-lysine biosynthesis via DAP pathway; LL-2,6-diaminopimelate from (S)-tetrahydrodipicolinate (succinylase route): step 1/3. This chain is 2,3,4,5-tetrahydropyridine-2,6-dicarboxylate N-succinyltransferase, found in Idiomarina loihiensis (strain ATCC BAA-735 / DSM 15497 / L2-TR).